A 158-amino-acid polypeptide reads, in one-letter code: Protein Smg homolog (158 aa).

Belongs to the Smg family.

This is Protein Smg homolog from Shewanella sp. (strain MR-4).